The chain runs to 252 residues: Pantothenate synthetase (252 aa).

Position 29–36 (29–36) interacts with ATP; sequence MGNLHAGH. H36 (proton donor) is an active-site residue. Q60 lines the (R)-pantoate pocket. Position 60 (Q60) interacts with beta-alanine. Residue 146-149 coordinates ATP; that stretch reads GEKD. A (R)-pantoate-binding site is contributed by Q152. ATP contacts are provided by residues V175 and 183–186; that span reads CSSR.

The protein belongs to the pantothenate synthetase family. In terms of assembly, homodimer.

It localises to the cytoplasm. It carries out the reaction (R)-pantoate + beta-alanine + ATP = (R)-pantothenate + AMP + diphosphate + H(+). It functions in the pathway cofactor biosynthesis; (R)-pantothenate biosynthesis; (R)-pantothenate from (R)-pantoate and beta-alanine: step 1/1. In terms of biological role, catalyzes the condensation of pantoate with beta-alanine in an ATP-dependent reaction via a pantoyl-adenylate intermediate. In Legionella pneumophila (strain Corby), this protein is Pantothenate synthetase.